Here is a 421-residue protein sequence, read N- to C-terminus: Medium-chain specific acyl-CoA dehydrogenase, mitochondrial (421 aa).

The transit peptide at 1–25 (MAAMFRRSCRVLRSLSHFGWRSQHT) directs the protein to the mitochondrion. K79 is modified (N6-acetyllysine). FAD is bound at residue 158 to 167 (YCVTEPGAGS). Position 167 (S167) interacts with octanoyl-CoA. At K179 the chain carries N6-succinyllysine. 191 to 193 (WIT) contributes to the FAD binding site. N6-acetyllysine; alternate is present on K212. K212 carries the N6-succinyllysine; alternate modification. S216 serves as a coordination point for octanoyl-CoA. Residues K217, K259, and K271 each carry the N6-acetyllysine; alternate modification. Residues K217, K259, and K271 each carry the N6-succinyllysine; alternate modification. Octanoyl-CoA is bound at residue D278. N6-acetyllysine is present on K279. Position 281 (R281) interacts with octanoyl-CoA. Residue K301 is modified to N6-acetyllysine. FAD is bound by residues 306–308 (RKT) and 316–317 (HQ). R349 and T351 together coordinate octanoyl-CoA. Position 351 is a phosphothreonine (T351). 374 to 378 (QVFGG) is an FAD binding site. E401 contacts octanoyl-CoA. E401 functions as the Proton acceptor in the catalytic mechanism. FAD is bound at residue 402 to 405 (GTAQ).

This sequence belongs to the acyl-CoA dehydrogenase family. As to quaternary structure, homotetramer. Interacts with the heterodimeric electron transfer flavoprotein ETF. Requires FAD as cofactor. Acetylated. Could occur at proximity of the cofactor-binding sites and reduce the catalytic activity. Could be deacetylated by SIRT3.

It is found in the mitochondrion matrix. It catalyses the reaction a medium-chain 2,3-saturated fatty acyl-CoA + oxidized [electron-transfer flavoprotein] + H(+) = a medium-chain (2E)-enoyl-CoA + reduced [electron-transfer flavoprotein]. It carries out the reaction pentanoyl-CoA + oxidized [electron-transfer flavoprotein] + H(+) = (2E)-pentenoyl-CoA + reduced [electron-transfer flavoprotein]. The catalysed reaction is hexanoyl-CoA + oxidized [electron-transfer flavoprotein] + H(+) = (2E)-hexenoyl-CoA + reduced [electron-transfer flavoprotein]. The enzyme catalyses octanoyl-CoA + oxidized [electron-transfer flavoprotein] + H(+) = (2E)-octenoyl-CoA + reduced [electron-transfer flavoprotein]. It catalyses the reaction decanoyl-CoA + oxidized [electron-transfer flavoprotein] + H(+) = (2E)-decenoyl-CoA + reduced [electron-transfer flavoprotein]. It carries out the reaction dodecanoyl-CoA + oxidized [electron-transfer flavoprotein] + H(+) = (2E)-dodecenoyl-CoA + reduced [electron-transfer flavoprotein]. The catalysed reaction is tetradecanoyl-CoA + oxidized [electron-transfer flavoprotein] + H(+) = (2E)-tetradecenoyl-CoA + reduced [electron-transfer flavoprotein]. The enzyme catalyses oxidized [electron-transfer flavoprotein] + hexadecanoyl-CoA + H(+) = (2E)-hexadecenoyl-CoA + reduced [electron-transfer flavoprotein]. Its pathway is lipid metabolism; mitochondrial fatty acid beta-oxidation. Functionally, medium-chain specific acyl-CoA dehydrogenase is one of the acyl-CoA dehydrogenases that catalyze the first step of mitochondrial fatty acid beta-oxidation, an aerobic process breaking down fatty acids into acetyl-CoA and allowing the production of energy from fats. The first step of fatty acid beta-oxidation consists in the removal of one hydrogen from C-2 and C-3 of the straight-chain fatty acyl-CoA thioester, resulting in the formation of trans-2-enoyl-CoA. Electron transfer flavoprotein (ETF) is the electron acceptor that transfers electrons to the main mitochondrial respiratory chain via ETF-ubiquinone oxidoreductase (ETF dehydrogenase). Among the different mitochondrial acyl-CoA dehydrogenases, medium-chain specific acyl-CoA dehydrogenase acts specifically on acyl-CoAs with saturated 6 to 12 carbons long primary chains. The sequence is that of Medium-chain specific acyl-CoA dehydrogenase, mitochondrial from Sus scrofa (Pig).